We begin with the raw amino-acid sequence, 154 residues long: 6,7-dimethyl-8-ribityllumazine synthase (154 aa).

5-amino-6-(D-ribitylamino)uracil-binding positions include F22, 56 to 58, and 80 to 82; these read AFE and AVI. 85 to 86 serves as a coordination point for (2S)-2-hydroxy-3-oxobutyl phosphate; sequence AT. H88 functions as the Proton donor in the catalytic mechanism. Residue F113 coordinates 5-amino-6-(D-ribitylamino)uracil. A (2S)-2-hydroxy-3-oxobutyl phosphate-binding site is contributed by R127.

Belongs to the DMRL synthase family.

The catalysed reaction is (2S)-2-hydroxy-3-oxobutyl phosphate + 5-amino-6-(D-ribitylamino)uracil = 6,7-dimethyl-8-(1-D-ribityl)lumazine + phosphate + 2 H2O + H(+). It participates in cofactor biosynthesis; riboflavin biosynthesis; riboflavin from 2-hydroxy-3-oxobutyl phosphate and 5-amino-6-(D-ribitylamino)uracil: step 1/2. Functionally, catalyzes the formation of 6,7-dimethyl-8-ribityllumazine by condensation of 5-amino-6-(D-ribitylamino)uracil with 3,4-dihydroxy-2-butanone 4-phosphate. This is the penultimate step in the biosynthesis of riboflavin. The sequence is that of 6,7-dimethyl-8-ribityllumazine synthase from Clostridium botulinum (strain Okra / Type B1).